The following is a 154-amino-acid chain: D-aminoacyl-tRNA deacylase (154 aa).

The short motif at 142 to 143 (GP) is the Gly-cisPro motif, important for rejection of L-amino acids element.

The protein belongs to the DTD family. In terms of assembly, homodimer.

It is found in the cytoplasm. The catalysed reaction is glycyl-tRNA(Ala) + H2O = tRNA(Ala) + glycine + H(+). It catalyses the reaction a D-aminoacyl-tRNA + H2O = a tRNA + a D-alpha-amino acid + H(+). Functionally, an aminoacyl-tRNA editing enzyme that deacylates mischarged D-aminoacyl-tRNAs. Also deacylates mischarged glycyl-tRNA(Ala), protecting cells against glycine mischarging by AlaRS. Acts via tRNA-based rather than protein-based catalysis; rejects L-amino acids rather than detecting D-amino acids in the active site. By recycling D-aminoacyl-tRNA to D-amino acids and free tRNA molecules, this enzyme counteracts the toxicity associated with the formation of D-aminoacyl-tRNA entities in vivo and helps enforce protein L-homochirality. The protein is D-aminoacyl-tRNA deacylase of Acidovorax sp. (strain JS42).